A 202-amino-acid chain; its full sequence is ATP-dependent Clp protease proteolytic subunit (202 aa).

Catalysis depends on Ser101, which acts as the Nucleophile. The active site involves His126.

Belongs to the peptidase S14 family. As to quaternary structure, component of the chloroplastic Clp protease core complex.

The protein localises to the plastid. It is found in the chloroplast stroma. It carries out the reaction Hydrolysis of proteins to small peptides in the presence of ATP and magnesium. alpha-casein is the usual test substrate. In the absence of ATP, only oligopeptides shorter than five residues are hydrolyzed (such as succinyl-Leu-Tyr-|-NHMec, and Leu-Tyr-Leu-|-Tyr-Trp, in which cleavage of the -Tyr-|-Leu- and -Tyr-|-Trp bonds also occurs).. Its function is as follows. Cleaves peptides in various proteins in a process that requires ATP hydrolysis. Has a chymotrypsin-like activity. Plays a major role in the degradation of misfolded proteins. This chain is ATP-dependent Clp protease proteolytic subunit, found in Acorus calamus (Sweet flag).